A 689-amino-acid polypeptide reads, in one-letter code: Glycine--tRNA ligase beta subunit (689 aa).

It belongs to the class-II aminoacyl-tRNA synthetase family. Tetramer of two alpha and two beta subunits.

The protein localises to the cytoplasm. It catalyses the reaction tRNA(Gly) + glycine + ATP = glycyl-tRNA(Gly) + AMP + diphosphate. The polypeptide is Glycine--tRNA ligase beta subunit (Pectobacterium atrosepticum (strain SCRI 1043 / ATCC BAA-672) (Erwinia carotovora subsp. atroseptica)).